A 23-amino-acid polypeptide reads, in one-letter code: Pseudin-4 (23 aa).

In terms of tissue distribution, expressed by the skin glands.

Its subcellular location is the secreted. Possesses antifungal activity against C.albicans and is also active against E.coli and S.aureus. This chain is Pseudin-4, found in Pseudis paradoxa (Paradoxical frog).